Reading from the N-terminus, the 308-residue chain is Glutaminase (308 aa).

7 residues coordinate substrate: S66, N117, E161, N168, Y192, Y244, and V262.

The protein belongs to the glutaminase family. Homotetramer.

It catalyses the reaction L-glutamine + H2O = L-glutamate + NH4(+). This chain is Glutaminase, found in Salmonella heidelberg (strain SL476).